Consider the following 1441-residue polypeptide: Envelopment polyprotein (1441 aa).

A signal peptide spans 1 to 13; sequence MIRMLVLIVVTAA. Residues 14–200 are Lumenal-facing; it reads SPVYQRCFQD…GSIANSICQN (187 aa). N-linked (GlcNAc...) asparagine; by host glycosylation occurs at Asn-57. Residues 201-221 form a helical membrane-spanning segment; that stretch reads IEIIILVTLTLLIFILLSILS. The Cytoplasmic portion of the chain corresponds to 222–305; the sequence is KTYICYLLMP…RAARVMCKSK (84 aa). The helical transmembrane segment at 306-326 threads the bilayer; that stretch reads GPASILSIITAVLVLTFVTPI. Topologically, residues 327-365 are lumenal; the sequence is NSMVLGESKETFELEELPDDMLEMALRINSYYFTCILNY. The helical transmembrane segment at 366 to 386 threads the bilayer; the sequence is AVSWGLIIAGLLVGLIFKKYQ. The Cytoplasmic segment spans residues 387–452; it reads HRFLNIYAMY…LVQYKAKWMM (66 aa). Residues 453 to 473 form a helical membrane-spanning segment; that stretch reads NFLIIYIFLILIKDSAIVGQA. The Lumenal portion of the chain corresponds to 474-1395; sequence TGTDFTTCLE…EPFKNLFGSY (922 aa). 2 N-linked (GlcNAc...) asparagine; by host glycosylation sites follow: Asn-490 and Asn-1177. A helical transmembrane segment spans residues 1396–1416; the sequence is IGIFYTFIISIIALLVIIYVL. The Cytoplasmic portion of the chain corresponds to 1417 to 1441; the sequence is LPICFKLRDTLRKHDDAYKREMKIR.

It belongs to the orthobunyavirus envelope glycoprotein family. Glycoprotein C and Glycoprotein N interact with each other. In terms of processing, specific enzymatic cleavages in vivo yield mature proteins including nonstructural protein NSm, glycoprotein C, and glycoprotein N.

The protein localises to the virion membrane. Its subcellular location is the host Golgi apparatus membrane. It is found in the host endoplasmic reticulum membrane. Glycoprotein C and Glycoprotein N interact with each other and are present at the surface of the virion. They are able to attach the virion to a cell receptor and to promote fusion of membranes after endocytosis of the virion. The sequence is that of Envelopment polyprotein (GP) from Bunyavirus La Crosse.